Reading from the N-terminus, the 108-residue chain is Trp operon repressor homolog (108 aa).

A DNA-binding region spans residues 59-82; sequence QRQISQLLGVGVATITRGSNELKS.

It belongs to the TrpR family. As to quaternary structure, homodimer.

Its subcellular location is the cytoplasm. This protein is an aporepressor. When complexed with L-tryptophan it binds the operator region of the trp operon and prevents the initiation of transcription. This chain is Trp operon repressor homolog, found in Aliivibrio salmonicida (strain LFI1238) (Vibrio salmonicida (strain LFI1238)).